Here is a 609-residue protein sequence, read N- to C-terminus: Mitogen-activated protein kinase kinase kinase 3 (609 aa).

A disordered region spans residues 1–202 (MPTWWGRKSC…SAVHGSRIGG (202 aa)). Basic and acidic residues predominate over residues 11–28 (KNKDDNHRGIISTDRDIK). Low complexity-rich tracts occupy residues 40–64 (PTRG…GFDS) and 90–108 (VSGS…SSGS). The Protein kinase domain occupies 214–470 (WKKGKFLGSG…ASQLLEHPFL (257 aa)). Residues 220-228 (LGSGTFGQV) and Lys-243 each bind ATP. Asp-339 acts as the Proton acceptor in catalysis. 2 disordered regions span residues 487 to 511 (PRSY…SHDN) and 590 to 609 (MEPS…SRLV). Positions 594 to 609 (SFRTQTPNSPLRSRLV) are enriched in polar residues.

This sequence belongs to the protein kinase superfamily. STE Ser/Thr protein kinase family. MAP kinase kinase kinase subfamily. In terms of assembly, interacts with PBL27. In terms of tissue distribution, expressed in flower buds, roots, leaves, seedlings, stems and immature siliques. Absent of mature pollen.

The catalysed reaction is L-seryl-[protein] + ATP = O-phospho-L-seryl-[protein] + ADP + H(+). The enzyme catalyses L-threonyl-[protein] + ATP = O-phospho-L-threonyl-[protein] + ADP + H(+). This chain is Mitogen-activated protein kinase kinase kinase 3, found in Arabidopsis thaliana (Mouse-ear cress).